The primary structure comprises 501 residues: Ribose import ATP-binding protein RbsA (501 aa).

2 ABC transporter domains span residues 5–241 (LQLK…VGRK) and 252–495 (APGD…VGKL). 37–44 (GENGAGKS) serves as a coordination point for ATP.

Belongs to the ABC transporter superfamily. Ribose importer (TC 3.A.1.2.1) family. In terms of assembly, the complex is composed of an ATP-binding protein (RbsA), two transmembrane proteins (RbsC) and a solute-binding protein (RbsB).

Its subcellular location is the cell inner membrane. The enzyme catalyses D-ribose(out) + ATP + H2O = D-ribose(in) + ADP + phosphate + H(+). Its function is as follows. Part of the ABC transporter complex RbsABC involved in ribose import. Responsible for energy coupling to the transport system. This chain is Ribose import ATP-binding protein RbsA, found in Escherichia coli O6:H1 (strain CFT073 / ATCC 700928 / UPEC).